We begin with the raw amino-acid sequence, 356 residues long: CMP-sialic acid transporter 2 (356 aa).

Positions 1-24 (MEYRRVKDQESYDVVSQKDIESPG) are enriched in basic and acidic residues. Residues 1–43 (MEYRRVKDQESYDVVSQKDIESPGERSLSSTSATSSLSTAGAS) form a disordered region. The Cytoplasmic segment spans residues 1-52 (MEYRRVKDQESYDVVSQKDIESPGERSLSSTSATSSLSTAGASKGNNSWKLK). Positions 27–43 (SLSSTSATSSLSTAGAS) are enriched in low complexity. The chain crosses the membrane as a helical span at residues 53-73 (SIVTLALTLLTSSQAILIVWS). Topologically, residues 74–82 (KRAGKYEYS) are lumenal. A helical transmembrane segment spans residues 83–103 (VTTANFSVEALKCLLSLIALY). The Cytoplasmic portion of the chain corresponds to 104–125 (RTWNSQGVTEDNRLSTSFDEVS). The helical transmembrane segment at 126–146 (VYPIPAILYMVKNLLQYYIFA) threads the bilayer. The Lumenal portion of the chain corresponds to 147-149 (YVD). The chain crosses the membrane as a helical span at residues 150 to 172 (APAYQILKNLNIISTGVLYRIIL). Residues 173 to 175 (KKK) are Cytoplasmic-facing. The chain crosses the membrane as a helical span at residues 176–196 (LSEIQWAAFILLCAGCTTAQL). The Lumenal segment spans residues 197-211 (NPSSDHVLQTPIQGW). Residues 212–232 (VMAIVMALLSGFAGVYTEAII) traverse the membrane as a helical segment. The Cytoplasmic portion of the chain corresponds to 233–239 (KKRPSRN). The helical transmembrane segment at 240-260 (INVQNFWLYIFGMLFNLVAIC) threads the bilayer. The Lumenal portion of the chain corresponds to 261–277 (VQDFDAVMNKGFFHGYS). The chain crosses the membrane as a helical span at residues 278-298 (FITVLMILNHALSGIAVSMVM). Residues 299-314 (KYADNIVKVYSTSVAM) are Cytoplasmic-facing. Residues 315 to 335 (LLTAVVSVFLFGFHLSLAFFL) form a helical membrane-spanning segment. Topologically, residues 336–356 (GSTVVSVSVYLHSVGKPQPQK) are lumenal.

Belongs to the nucleotide-sugar transporter family. CMP-Sialate:CMP antiporter (TC 2.A.7.12) subfamily.

The protein resides in the golgi apparatus membrane. In terms of biological role, sugar transporter involved in the transport of CMP-sialic acid from the cytoplasm into the Golgi. May transport important nucleotide sugars such as CMP-Kdo (2-keto-3-deoxy-D-manno-octulosonic acid) in physiological conditions. This is CMP-sialic acid transporter 2 from Oryza sativa subsp. indica (Rice).